Here is a 308-residue protein sequence, read N- to C-terminus: Mitoferrin (308 aa).

Transmembrane regions (helical) follow at residues 13-29, 69-89, 111-131, 168-184, 213-233, and 285-302; these read GGSF…AGFA, ITGL…SHAV, IKVG…ASPM, YTTT…VYFA, LVAG…FDVV, and MVFH…YEYF. Solcar repeat units lie at residues 14 to 100, 108 to 192, and 207 to 305; these read GSFY…LKFK, HHPI…LKKI, and YQLI…FKFI.

Belongs to the mitochondrial carrier (TC 2.A.29) family.

It localises to the mitochondrion inner membrane. Functionally, mitochondrial solute carriers shuttle metabolites, nucleotides, and cofactors through the mitochondrial inner membrane. Mitochondrial iron transporter that mediates iron uptake. Probably required for heme synthesis of hemoproteins and Fe-S cluster assembly. This Dictyostelium discoideum (Social amoeba) protein is Mitoferrin (mcfF).